The sequence spans 142 residues: Large ribosomal subunit protein bL21 (142 aa).

The span at 73-84 (KRRRQNSKRTRG) shows a compositional bias: basic residues. Positions 73–142 (KRRRQNSKRT…KAAAKAESAE (70 aa)) are disordered. Positions 107–125 (KAAEKKAPKADAAEGEAAK) are enriched in basic and acidic residues. The span at 126–135 (PKKAAPKKAA) shows a compositional bias: basic residues.

This sequence belongs to the bacterial ribosomal protein bL21 family. Part of the 50S ribosomal subunit. Contacts protein L20.

In terms of biological role, this protein binds to 23S rRNA in the presence of protein L20. The sequence is that of Large ribosomal subunit protein bL21 from Brucella canis (strain ATCC 23365 / NCTC 10854 / RM-666).